The primary structure comprises 113 residues: Replication initiation control protein YabA (113 aa).

Zn(2+) is bound by residues His-86, Cys-88, Cys-102, and Cys-105.

It belongs to the YabA family. Homotetramer. Interacts with both DnaA and DnaN, acting as a bridge between these two proteins. The cofactor is Zn(2+).

It is found in the cytoplasm. The protein localises to the nucleoid. Involved in control of chromosome replication initiation. Inhibits the cooperative binding of DnaA to the oriC region, thus negatively regulating initiation of chromosome replication. Inhibits the ability of DnaA-ATP to form a helix on DNA; does not disassemble preformed DnaA-DNA helices. Decreases the residence time of DnaA on the chromosome at its binding sites (oriC, replication forks and promoter-binding sites). Tethers DnaA to the replication machinery via the DNA polymerase beta sliding clamp subunit (dnaN). Associates with oriC and other DnaA targets on the chromosome in a DnaA-dependent manner. This chain is Replication initiation control protein YabA, found in Pediococcus pentosaceus (strain ATCC 25745 / CCUG 21536 / LMG 10740 / 183-1w).